A 708-amino-acid polypeptide reads, in one-letter code: Lactotransferrin (708 aa).

Positions 1-19 (MKLLFLALLSLLALGPSLA) are cleaved as a signal peptide. 2 Transferrin-like domains span residues 25-352 (VRWC…NLKE) and 364-693 (VVWC…NLRQ). 2 disulfide bridges follow: Cys28–Cys64 and Cys38–Cys55. Residue Asp79 coordinates Fe(3+). Residue Arg92 is part of the active site. Tyr111 serves as a coordination point for Fe(3+). 5 cysteine pairs are disulfide-bonded: Cys134–Cys217, Cys176–Cys192, Cys179–Cys202, Cys189–Cys200, and Cys250–Cys264. A hydrogencarbonate-binding site is contributed by Thr136. Residue Asn139 is glycosylated (N-linked (GlcNAc...) asparagine). 3 residues coordinate hydrogencarbonate: Arg140, Ala142, and Gly143. Tyr211 serves as a coordination point for Fe(3+). His272 lines the Fe(3+) pocket. Ser278 acts as the Nucleophile in catalysis. Intrachain disulfides connect Cys367–Cys399 and Cys377–Cys390. A glycan (N-linked (GlcNAc...) asparagine) is linked at Asn385. Asp414 and Asp452 together coordinate Fe(3+). 4 disulfide bridges follow: Cys476–Cys551, Cys510–Cys524, Cys521–Cys534, and Cys592–Cys606. Hydrogencarbonate is bound by residues Thr478, Arg482, Ala484, and Gly485. Asn495 carries an N-linked (GlcNAc...) asparagine glycan. Tyr545 is a binding site for Fe(3+). His614 contacts Fe(3+).

The protein belongs to the transferrin family. In terms of assembly, monomer. Found in a complex with LTF, CLU, EPPIN and SEMG1. Interacts with prey activated coagulation factor X; the interaction inhibits coagulation factor X catalytic activity. Found in a complex with MPO and LTF; interacts directly with CP, allows Fe(3+) incorporation into LTF and activation of CP ferroxidase activity. Post-translationally, N-glycosylated. Glycosylation is important for draculin anticoagulant activity. Probably also O-glycosylated. In terms of tissue distribution, expressed in the submaxillary gland and secreted in the saliva (at protein level).

Its subcellular location is the secreted. Its function is as follows. Transferrins are iron binding transport proteins which can bind two Fe(3+) ions in association with the binding of an anion, usually bicarbonate. Functionally, major iron-binding and multifunctional protein found in exocrine fluids such as breast milk and mucosal secretions. Has antimicrobial activity. Antimicrobial properties may include bacteriostasis, which is related to its ability to sequester free iron and thus inhibit microbial growth, as well as direct bactericidal properties leading to the release of lipopolysaccharides from the bacterial outer membrane. May have anabolic, differentiating and anti-apoptotic effects on osteoblasts and may also inhibit osteoclastogenesis, possibly playing a role in the regulation of bone growth. May interfere with the lipopolysaccharide (LPS)-stimulated TLR4 signaling. In terms of biological role, the lactotransferrin transferrin-like domain 1 functions as a serine protease of the peptidase S60 family that cuts arginine rich regions. This function contributes to the antimicrobial activity. Shows a preferential cleavage at -Arg-Ser-Arg-Arg-|- and -Arg-Arg-Ser-Arg-|-, and of Z-Phe-Arg-|-aminomethylcoumarin sites. Acts as an anticoagulant of the blood coagulation cascade of the bat's prey by inhibiting coagulation factor IX and activated coagulation factor X. The chain is Lactotransferrin from Desmodus rotundus (Vampire bat).